The following is a 390-amino-acid chain: MALYRAPKLQRSLLNRCLATASTTPAAASTSRTSTFRKTLEEGPTLDDFIAGDVPNNRVVLGNTSAPRLPSYLKTSIPTGASFSKIKKDLRGLNLHTVCEEARCPNIGDCWGGKPGATEAEGRSAATATIMLMGDTCTRGCRFCSVKTSRTPPPLDPHEPENTAEAISRWGLGYIVLTSVDRDDLADGGARHFAETISKIKQKAPHILVEALTGDFAGNLEHVSLVAKSGLDVYAHNIETVEALTPFVRDRRATFRQSLSVLKRAKEEGVKVTKTSIMLGVGETEDQVLDALKELRKVDVDVVTFGQYMRPTKRHMKVDRYVEPAEFDRWKQVAEDLGFLYVASGPLVRSSYKAGEFYIENVLKGKSVNKRVKNLTMESELSEKSASASL.

The transit peptide at methionine 1–leucine 18 directs the protein to the mitochondrion. [4Fe-4S] cluster is bound by residues cysteine 99, cysteine 104, cysteine 110, cysteine 137, cysteine 141, cysteine 144, and serine 351. In terms of domain architecture, Radical SAM core spans alanine 120 to leucine 340.

This sequence belongs to the radical SAM superfamily. Lipoyl synthase family. It depends on [4Fe-4S] cluster as a cofactor.

It is found in the mitochondrion. The catalysed reaction is [[Fe-S] cluster scaffold protein carrying a second [4Fe-4S](2+) cluster] + N(6)-octanoyl-L-lysyl-[protein] + 2 oxidized [2Fe-2S]-[ferredoxin] + 2 S-adenosyl-L-methionine + 4 H(+) = [[Fe-S] cluster scaffold protein] + N(6)-[(R)-dihydrolipoyl]-L-lysyl-[protein] + 4 Fe(3+) + 2 hydrogen sulfide + 2 5'-deoxyadenosine + 2 L-methionine + 2 reduced [2Fe-2S]-[ferredoxin]. It participates in protein modification; protein lipoylation via endogenous pathway; protein N(6)-(lipoyl)lysine from octanoyl-[acyl-carrier-protein]: step 2/2. Functionally, catalyzes the radical-mediated insertion of two sulfur atoms into the C-6 and C-8 positions of the octanoyl moiety bound to the lipoyl domains of lipoate-dependent enzymes, thereby converting the octanoylated domains into lipoylated derivatives. The chain is Lipoyl synthase, mitochondrial from Coprinopsis cinerea (strain Okayama-7 / 130 / ATCC MYA-4618 / FGSC 9003) (Inky cap fungus).